Reading from the N-terminus, the 152-residue chain is MSTINTDANEAMPHISVNAQYIKDLSLENPDAPSSLAALEHRPQIDLSLDINITNLSEENFYEVELNIEAVARNEKYKLFQVELKYAGVFNLINIAPEQHQILLSVHCPAMIFPFARKIIASCTQDAGFQPLMIDPIDFGALYHKKMSEHQN.

The protein belongs to the SecB family. Homotetramer, a dimer of dimers. One homotetramer interacts with 1 SecA dimer.

Its subcellular location is the cytoplasm. Its function is as follows. One of the proteins required for the normal export of preproteins out of the cell cytoplasm. It is a molecular chaperone that binds to a subset of precursor proteins, maintaining them in a translocation-competent state. It also specifically binds to its receptor SecA. The chain is Protein-export protein SecB from Rickettsia bellii (strain RML369-C).